Here is a 172-residue protein sequence, read N- to C-terminus: Small ribosomal subunit protein uS5 (172 aa).

Positions 17-80 (MREKMIAVNR…EEARRKMIKV (64 aa)) constitute an S5 DRBM domain.

Belongs to the universal ribosomal protein uS5 family. In terms of assembly, part of the 30S ribosomal subunit. Contacts proteins S4 and S8.

Functionally, with S4 and S12 plays an important role in translational accuracy. Its function is as follows. Located at the back of the 30S subunit body where it stabilizes the conformation of the head with respect to the body. The protein is Small ribosomal subunit protein uS5 of Herminiimonas arsenicoxydans.